Reading from the N-terminus, the 99-residue chain is Transcriptional repressor PagR (99 aa).

The region spanning 9–99 is the HTH arsR-type domain; the sequence is IEYMSLEDDA…GIIKLLNPIQ (91 aa). The segment at residues 43-62 is a DNA-binding region (H-T-H motif); it reads NVTQIIQILKLPQSTVSQHL.

Its function is as follows. Represses the expression of the pagA and atxA genes. The sequence is that of Transcriptional repressor PagR (pagR) from Bacillus anthracis.